A 337-amino-acid chain; its full sequence is Transaldolase (337 aa).

Positions 1–10 (MSGSPVKRQR) match the Nuclear localization signal motif. Lys142 serves as the catalytic Schiff-base intermediate with substrate. Lys219 is modified (N6-acetyllysine). Phosphoserine is present on residues Ser237 and Ser256. Lys269, Lys286, and Lys321 each carry N6-acetyllysine.

Belongs to the transaldolase family. Type 1 subfamily. As to quaternary structure, homodimer. Interacts with KPNA1 and KPNA4.

Its subcellular location is the nucleus. It is found in the cytoplasm. It catalyses the reaction D-sedoheptulose 7-phosphate + D-glyceraldehyde 3-phosphate = D-erythrose 4-phosphate + beta-D-fructose 6-phosphate. Its pathway is carbohydrate degradation; pentose phosphate pathway; D-glyceraldehyde 3-phosphate and beta-D-fructose 6-phosphate from D-ribose 5-phosphate and D-xylulose 5-phosphate (non-oxidative stage): step 2/3. Functionally, catalyzes the rate-limiting step of the non-oxidative phase in the pentose phosphate pathway. Catalyzes the reversible conversion of sedheptulose-7-phosphate and D-glyceraldehyde 3-phosphate into erythrose-4-phosphate and beta-D-fructose 6-phosphate. In Sus scrofa (Pig), this protein is Transaldolase (TALDO1).